A 710-amino-acid polypeptide reads, in one-letter code: Proline-rich receptor-like protein kinase PERK13 (710 aa).

The tract at residues 1-229 is disordered; the sequence is MSDSPTSSPP…SVPPPANSGG (229 aa). The Extracellular segment spans residues 1–235; it reads MSDSPTSSPP…NSGGGYQGKT (235 aa). Pro residues-rich tracts occupy residues 7-21, 29-130, 137-151, and 168-188; these read SSPPAPSADSAPPPD, APPP…PPPP, PPAPPPPEQLPPPAS, and ATSPPAPSAPATSPPAPPNAP. Asn-191 carries an N-linked (GlcNAc...) asparagine glycan. Low complexity predominate over residues 209 to 220; sequence SPSRGVPSSGNS. A helical membrane pass occupies residues 236-256; that stretch reads MAGFAIAGFAVIALMAVVFLV. Residues 257–710 lie on the Cytoplasmic side of the membrane; the sequence is RRKKKRNIDA…ENRNFNNRRY (454 aa). Positions 289–334 are disordered; the sequence is QNPTKGYSGPGGYNSQQQSNSGNSFGSQRGGGGYTRSGSAPDSAVM. Residues 301–315 are compositionally biased toward low complexity; the sequence is YNSQQQSNSGNSFGS. At Thr-342 the chain carries Phosphothreonine. The 267-residue stretch at 353-619 folds into the Protein kinase domain; it reads FSKHNILGEG…RHSGPKRPRM (267 aa). ATP contacts are provided by residues 359-367 and Lys-381; that span reads LGEGGFGCV. Tyr-426 carries the phosphotyrosine modification. Catalysis depends on Asp-477, which acts as the Proton acceptor. Residue Ser-510 is modified to Phosphoserine. 2 positions are modified to phosphothreonine: Thr-511 and Thr-516. Position 524 is a phosphotyrosine (Tyr-524). The interval 676 to 710 is disordered; the sequence is SGDYSVQDSRKGSNGASSEFTRNETENRNFNNRRY.

The protein belongs to the protein kinase superfamily. Ser/Thr protein kinase family. Interacts with KIPK1 and KIPK2 (via its cytosolic domain). Mostly expressed in roots, especially in root hairs.

It localises to the cell membrane. The catalysed reaction is L-seryl-[protein] + ATP = O-phospho-L-seryl-[protein] + ADP + H(+). It catalyses the reaction L-threonyl-[protein] + ATP = O-phospho-L-threonyl-[protein] + ADP + H(+). Functionally, negatively regulates root hair elongation. The sequence is that of Proline-rich receptor-like protein kinase PERK13 (PERK13) from Arabidopsis thaliana (Mouse-ear cress).